Consider the following 256-residue polypeptide: Homeobox protein Hox-D13a (256 aa).

A DNA-binding region (homeobox) is located at residues 191 to 250; sequence GRKKRVPYTKFQLKELEREYNTTKFITKENRRRIASSTNLSERQVTIWFQNRRVKDKKRP.

The protein belongs to the Abd-B homeobox family.

It is found in the nucleus. Sequence-specific transcription factor which is part of a developmental regulatory system that provides cells with specific positional identities on the anterior-posterior axis. This is Homeobox protein Hox-D13a (hoxd13a) from Danio rerio (Zebrafish).